We begin with the raw amino-acid sequence, 258 residues long: Tryptophan synthase alpha chain (258 aa).

Active-site proton acceptor residues include Glu47 and Asp58.

This sequence belongs to the TrpA family. As to quaternary structure, tetramer of two alpha and two beta chains.

The catalysed reaction is (1S,2R)-1-C-(indol-3-yl)glycerol 3-phosphate + L-serine = D-glyceraldehyde 3-phosphate + L-tryptophan + H2O. It functions in the pathway amino-acid biosynthesis; L-tryptophan biosynthesis; L-tryptophan from chorismate: step 5/5. Functionally, the alpha subunit is responsible for the aldol cleavage of indoleglycerol phosphate to indole and glyceraldehyde 3-phosphate. This Bacillus cereus (strain AH820) protein is Tryptophan synthase alpha chain.